A 336-amino-acid chain; its full sequence is tRNA N6-adenosine threonylcarbamoyltransferase (336 aa).

2 residues coordinate Fe cation: His-114 and His-118. Substrate contacts are provided by residues 136–140 (LVSGG), Asp-169, Gly-182, Asp-186, and Asn-275. Asp-301 is a Fe cation binding site.

The protein belongs to the KAE1 / TsaD family. Fe(2+) is required as a cofactor.

Its subcellular location is the cytoplasm. The catalysed reaction is L-threonylcarbamoyladenylate + adenosine(37) in tRNA = N(6)-L-threonylcarbamoyladenosine(37) in tRNA + AMP + H(+). Its function is as follows. Required for the formation of a threonylcarbamoyl group on adenosine at position 37 (t(6)A37) in tRNAs that read codons beginning with adenine. Is involved in the transfer of the threonylcarbamoyl moiety of threonylcarbamoyl-AMP (TC-AMP) to the N6 group of A37, together with TsaE and TsaB. TsaD likely plays a direct catalytic role in this reaction. This Streptococcus pneumoniae serotype 4 (strain ATCC BAA-334 / TIGR4) protein is tRNA N6-adenosine threonylcarbamoyltransferase.